Reading from the N-terminus, the 344-residue chain is MKVIKTAPLIPSEIKVLEKEGNRVKISLAPFEFGYAVTLAHPIRRLLLLSSVGYAPVGLKIEGVHHEFDSLRGVTEDVSLFIMNLKNIRFIAKALVGQDSSLENQSVVVDYSFKGPMELRARDLNSDHIEIVNPEMPLATINEDAQLNFSLIIYKGMGYVPSENTRELMPEGYMPLDGSFTPIKNVVYEIENVLVEGDPNYEKIIFDIETDGQIDPYKAFLSAVKVMSKQLGVFGERPIANTEYSGDYAQRDDAKDLSAKIESMNLSARCFNCLDKIGIKYVGELVLMSEEELKGVKNMGKKSYDEIAEKLNDLGYPVGTELSPEQRESLKKRLEKLEDKGGND.

An alpha N-terminal domain (alpha-NTD) region spans residues 1–238 (MKVIKTAPLI…KQLGVFGERP (238 aa)). Residues 254 to 344 (AKDLSAKIES…EKLEDKGGND (91 aa)) are alpha C-terminal domain (alpha-CTD).

The protein belongs to the RNA polymerase alpha chain family. In terms of assembly, homodimer. The RNAP catalytic core consists of 2 alpha, 1 beta, 1 beta' and 1 omega subunit. When a sigma factor is associated with the core the holoenzyme is formed, which can initiate transcription.

The catalysed reaction is RNA(n) + a ribonucleoside 5'-triphosphate = RNA(n+1) + diphosphate. Functionally, DNA-dependent RNA polymerase catalyzes the transcription of DNA into RNA using the four ribonucleoside triphosphates as substrates. The protein is DNA-directed RNA polymerase subunit alpha of Helicobacter pylori (strain J99 / ATCC 700824) (Campylobacter pylori J99).